The following is a 647-amino-acid chain: RalA-binding protein 1 (647 aa).

Disordered regions lie at residues 1–151 (MTEC…EKKC) and 163–186 (WKEK…APSL). Threonine 2 carries the N-acetylthreonine modification. Positions 24–33 (LTRTPSSEEI) are enriched in polar residues. Serine 29, serine 30, and serine 34 each carry phosphoserine. A Phosphothreonine modification is found at threonine 44. 2 positions are modified to phosphoserine: serine 48 and serine 62. A compositionally biased stretch (basic and acidic residues) spans 52–68 (DILHEPPDIVSDDEKDH). 69–74 (GKKKGK) lines the ATP pocket. Basic residues predominate over residues 69-79 (GKKKGKFKKKE). A phosphoserine mark is found at serine 92 and serine 93. The span at 102 to 118 (KMKRSKGIHVFKKPSFS) shows a compositional bias: basic residues. The interval 102 to 119 (KMKRSKGIHVFKKPSFSK) is nuclear localization signal. The segment covering 119 to 151 (KKKEKDFKIKEKPKEEKHKEEKHKEEKHKEKKC) has biased composition (basic and acidic residues). Residues 154 to 219 (FTAADVVKQW…PAVFRECVDY (66 aa)) form a mediates association with membranes and could form transmembrane domains region. The Rho-GAP domain maps to 192–380 (APFADAVERT…VLLKQVTRPL (189 aa)). The interval 403–499 (RRQEFLLNCL…LTEQEELLAM (97 aa)) is mediates interaction with RALA and RALB. 418-425 (GGIKDFSK) serves as a coordination point for ATP. Phosphoserine is present on residues serine 461 and serine 463. The tract at residues 500–647 (EQFLRRQIAS…PSKDRKETPI (148 aa)) is mediates interaction with REPS1 and REPS2. 2 disordered regions span residues 525–550 (QSRQ…DEEE) and 601–647 (EQQL…ETPI). Residues 535-550 (EEYSSDSESESEDEEE) are compositionally biased toward acidic residues. Positions 628 to 647 (RAAKEQAKPSPSKDRKETPI) are enriched in basic and acidic residues. Serine 637 carries the post-translational modification Phosphoserine.

As to quaternary structure, interacts with the GTP-bound form of RALA (via effector domain); during mitosis, recruits RALBP1 to the mitochondrion where it promotes DNM1L phosphorylation and mitochondrial fission. Interacts with DNM1L; mediates its mitotic kinase cyclin B-CDK1-mediated phosphorylation during mitosis to promote mitochondrial fission. Interacts with the mitotic kinase cyclin B-CDK1 during mitosis. Interacts with the GTP-bound form of RALB (via effector domain). Interacts with REPS1; the interaction is direct and does not affect RALA-binding nor GTPase activator activity of RALBP1. Interacts with REPS2; the interaction is direct and does not affect RALA-binding nor GTPase activator activity of RALBP1. Interacts with EPN1, NUMB and TFAP2A during interphase and mitosis. Interacts with AP2M1; as part of the AP2 complex. Interacts with CDC42. Interacts with RAC1. In terms of processing, tyrosine-phosphorylated upon stimulation of cells with EGF. May undergo proteolytic cleavage to give peptides which reassemble to form a transporter complex. As to expression, ubiquitously expressed.

Its subcellular location is the cell membrane. It is found in the cytoplasm. The protein localises to the cytosol. The protein resides in the cytoskeleton. It localises to the spindle pole. Its subcellular location is the nucleus. It is found in the mitochondrion. The catalysed reaction is an S-substituted glutathione(in) + ATP + H2O = an S-substituted glutathione(out) + ADP + phosphate + H(+). It catalyses the reaction ATP + H2O + xenobioticSide 1 = ADP + phosphate + xenobioticSide 2.. The enzyme catalyses leukotriene C4(in) + ATP + H2O = leukotriene C4(out) + ADP + phosphate + H(+). Functionally, multifunctional protein that functions as a downstream effector of RALA and RALB. As a GTPase-activating protein/GAP can inactivate CDC42 and RAC1 by stimulating their GTPase activity. As part of the Ral signaling pathway, may also regulate ligand-dependent EGF and insulin receptors-mediated endocytosis. During mitosis, may act as a scaffold protein in the phosphorylation of EPSIN/EPN1 by the mitotic kinase cyclin B-CDK1, preventing endocytosis during that phase of the cell cycle. During mitosis, also controls mitochondrial fission as an effector of RALA. Recruited to mitochondrion by RALA, acts as a scaffold to foster the mitotic kinase cyclin B-CDK1-mediated phosphorylation and activation of DNM1L. Could also function as a primary ATP-dependent active transporter for glutathione conjugates of electrophiles. May also actively catalyze the efflux of a wide range of substrates including xenobiotics like doxorubicin (DOX) contributing to cell multidrug resistance. This chain is RalA-binding protein 1, found in Rattus norvegicus (Rat).